Reading from the N-terminus, the 310-residue chain is Olfactory receptor 5P53 (310 aa).

Over 1-25 (MEAENHTTVAELIILGLTEDPKLCI) the chain is Extracellular. N-linked (GlcNAc...) asparagine glycosylation is present at asparagine 5. A helical membrane pass occupies residues 26-46 (VFFVIFLGVYIVTLVGNISII). At 47 to 54 (TLIRISSQ) the chain is on the cytoplasmic side. The chain crosses the membrane as a helical span at residues 55–75 (LHTPMYLFLSHLAFVDILYST). Over 76-99 (SVSVIMHMELLGHGLALPVAACAA) the chain is Extracellular. A disulfide bridge links cysteine 97 with cysteine 189. A helical membrane pass occupies residues 100–120 (QLCITVSFGSAECFLLAAMAY). Residues 121–133 (DRYVAICSPLLYS) are Cytoplasmic-facing. The chain crosses the membrane as a helical span at residues 134–154 (TLMSPRVCFLLLGMSYVGGCM). Over 155-196 (NGWTFTGCLLSLSFCGPNQIDHFFCDFSPLLKLSCSDVSIIG) the chain is Extracellular. Residues 197–217 (IIPSISSGSIIVVTVFVIAVS) traverse the membrane as a helical segment. Residues 218–237 (YIYILITILNMRSTEGRHKA) lie on the Cytoplasmic side of the membrane. Residues 238–258 (FSTCTSHLTAVTLYYGTITFI) form a helical membrane-spanning segment. Residues 259–271 (YVMPKSNYSTEQN) are Extracellular-facing. A glycan (N-linked (GlcNAc...) asparagine) is linked at asparagine 265. Residues 272 to 292 (KVLSVFYTVVIPMLNPLIYSL) traverse the membrane as a helical segment. Residues 293 to 310 (RNRDVKEALRKATVRVYS) are Cytoplasmic-facing.

It belongs to the G-protein coupled receptor 1 family.

It is found in the cell membrane. Its function is as follows. Potential odorant receptor. This Mus musculus (Mouse) protein is Olfactory receptor 5P53.